A 709-amino-acid chain; its full sequence is Tyrosine-protein phosphatase cdc-14 (709 aa).

A Tyrosine-protein phosphatase domain is found at 196–354; sequence DFNWIIPGKI…QKFCWSLSQS (159 aa). The active-site Phosphocysteine intermediate is Cys-295. The short motif at 366-371 is the Nuclear localization signal element; sequence KRNVRR. The Nuclear export signal motif lies at 372 to 381; it reads LVNQVDDINL. 3 disordered regions span residues 403–541, 573–594, and 628–661; these read VQVQ…LTRT, RYLS…GTSP, and ESKP…PYPS. Positions 404 to 413 are enriched in polar residues; the sequence is QVQNGRSTAP. Over residues 463–479 the composition is skewed to low complexity; it reads TTSPNSSSSRRFVKSST. Composition is skewed to polar residues over residues 480-490 and 501-521; these read PQMTVPSQAYL and PSKN…TPNG. Residues 526–541 show a composition bias toward low complexity; that stretch reads RTRNSSGNTTSTLTRT. The span at 639–649 shows a compositional bias: polar residues; that stretch reads PGTSKSTSSLK.

Belongs to the protein-tyrosine phosphatase family. Non-receptor class CDC14 subfamily.

It localises to the cytoplasm. Its subcellular location is the cytoskeleton. It is found in the microtubule organizing center. The protein localises to the centrosome. The protein resides in the spindle. It localises to the midbody. Its subcellular location is the nucleus. The catalysed reaction is O-phospho-L-tyrosyl-[protein] + H2O = L-tyrosyl-[protein] + phosphate. Its activity is regulated as follows. Inhibited by sodium orthovanadate. Weakly inhibited by sodium fluoride and okadaic acid. In terms of biological role, protein phosphatase that negatively regulates the G1-to-S phase transition to inhibit the cell cycle and establish quiescence in cells of multiple lineages including vulval, hypodermal and intestinal. Promotes nuclear accumulation and activity of the cyclin-dependent kinase inhibitor cki-1 which leads to inhibition of G1 progression during vulval tissue development. Has been shown to not be required for cytokinesis. However, in the embryo, in a contrasting study, has been shown to act as a regulator of central spindle formation and cytokinesis, and may be required for localization of the spindle component zen-4, and its interacting partner air-2 at the spindle during late cell divisions. Functionally, main regulator of cell cycle arrest in vulval precursor cells. This Caenorhabditis elegans protein is Tyrosine-protein phosphatase cdc-14.